A 563-amino-acid chain; its full sequence is 2-isopropylmalate synthase (563 aa).

The region spanning 31–305 is the Pyruvate carboxyltransferase domain; sequence PIWMSTDLRD…DPGLDFAQIN (275 aa). Aspartate 40, histidine 244, histidine 246, and asparagine 280 together coordinate Mg(2+). A regulatory domain region spans residues 437 to 563; that stretch reads RAEPIEYLSH…EWARLCGGAE (127 aa).

The protein belongs to the alpha-IPM synthase/homocitrate synthase family. LeuA type 2 subfamily. In terms of assembly, homodimer. The cofactor is Mg(2+).

It localises to the cytoplasm. It catalyses the reaction 3-methyl-2-oxobutanoate + acetyl-CoA + H2O = (2S)-2-isopropylmalate + CoA + H(+). It participates in amino-acid biosynthesis; L-leucine biosynthesis; L-leucine from 3-methyl-2-oxobutanoate: step 1/4. Functionally, catalyzes the condensation of the acetyl group of acetyl-CoA with 3-methyl-2-oxobutanoate (2-ketoisovalerate) to form 3-carboxy-3-hydroxy-4-methylpentanoate (2-isopropylmalate). The sequence is that of 2-isopropylmalate synthase from Parvibaculum lavamentivorans (strain DS-1 / DSM 13023 / NCIMB 13966).